We begin with the raw amino-acid sequence, 384 residues long: uncharacterized protein (384 aa).

Disordered stretches follow at residues 133 to 257 and 297 to 368; these read RQNS…TNQD and ERTP…STAT. Residues 143 to 157 are compositionally biased toward low complexity; that stretch reads PSTSSEPEPQPSTSS. The span at 302–315 shows a compositional bias: acidic residues; it reads DQTDITDDSADWSE. The segment covering 316–342 has biased composition (basic and acidic residues); the sequence is GETRRPSHSEVGERRLSRENNSEDPNR. The span at 343-363 shows a compositional bias: basic residues; it reads SRSRSRSRERRRRRPRVRPGR.

This is an uncharacterized protein from Gallid herpesvirus 2 (strain Chicken/Md5/ATCC VR-987) (GaHV-2).